A 368-amino-acid chain; its full sequence is tRNA(Met) cytidine acetate ligase (368 aa).

Residues 7 to 20 (IAEFNPFHNGHKYL), G96, N152, and R175 each bind ATP.

Belongs to the TmcAL family.

It is found in the cytoplasm. The enzyme catalyses cytidine(34) in elongator tRNA(Met) + acetate + ATP = N(4)-acetylcytidine(34) in elongator tRNA(Met) + AMP + diphosphate. In terms of biological role, catalyzes the formation of N(4)-acetylcytidine (ac(4)C) at the wobble position of elongator tRNA(Met), using acetate and ATP as substrates. First activates an acetate ion to form acetyladenylate (Ac-AMP) and then transfers the acetyl group to tRNA to form ac(4)C34. The polypeptide is tRNA(Met) cytidine acetate ligase (Streptococcus pyogenes serotype M1).